The following is a 431-amino-acid chain: Gamma-glutamyl phosphate reductase (431 aa).

It belongs to the gamma-glutamyl phosphate reductase family.

The protein localises to the cytoplasm. The catalysed reaction is L-glutamate 5-semialdehyde + phosphate + NADP(+) = L-glutamyl 5-phosphate + NADPH + H(+). Its pathway is amino-acid biosynthesis; L-proline biosynthesis; L-glutamate 5-semialdehyde from L-glutamate: step 2/2. Catalyzes the NADPH-dependent reduction of L-glutamate 5-phosphate into L-glutamate 5-semialdehyde and phosphate. The product spontaneously undergoes cyclization to form 1-pyrroline-5-carboxylate. The chain is Gamma-glutamyl phosphate reductase from Acetivibrio thermocellus (strain ATCC 27405 / DSM 1237 / JCM 9322 / NBRC 103400 / NCIMB 10682 / NRRL B-4536 / VPI 7372) (Clostridium thermocellum).